The chain runs to 96 residues: Small ribosomal subunit protein uS19 (96 aa).

Belongs to the universal ribosomal protein uS19 family.

Its function is as follows. Protein S19 forms a complex with S13 that binds strongly to the 16S ribosomal RNA. This is Small ribosomal subunit protein uS19 from Koribacter versatilis (strain Ellin345).